Consider the following 954-residue polypeptide: SWI/SNF-related matrix-associated actin-dependent regulator of chromatin subfamily A-like protein 1 (954 aa).

2 disordered regions span residues 1–20 (MSLPLTEEQRKKIEENRQKA) and 27–238 (KLLA…NSQK). Position 2 is an N-acetylserine (Ser2). A coiled-coil region spans residues 3–34 (LPLTEEQRKKIEENRQKALARRAEKLLAEQHQ). Positions 5-30 (LTEEQRKKIEENRQKALARRAEKLLA) are mediates interaction with RPA2. Residues 7-20 (EEQRKKIEENRQKA) are compositionally biased toward basic and acidic residues. Over residues 72–83 (KQQNLSSSSNAD) the composition is skewed to polar residues. Phosphoserine is present on residues Ser112, Ser123, Ser129, and Ser151. Composition is skewed to polar residues over residues 171–183 (KSSQETPAHSSGQ) and 197–238 (ASPS…NSQK). Ser198 carries the phosphoserine modification. HARP domains lie at 226-303 (SGSS…QPLE) and 327-398 (SLSF…DPLP). Positions 445 to 600 (NFAIAKGGRL…YTQIIAVKPT (156 aa)) constitute a Helicase ATP-binding domain. 458-465 (DDMGLGKT) lines the ATP pocket. The DESH box signature appears at 549–552 (DESH). The Nuclear localization signal signature appears at 644 to 661 (RRLKSDVLSQLPAKQRKI). The region spanning 716–869 (YILDLLESGR…ETNFSEMTES (154 aa)) is the Helicase C-terminal domain. The interval 904-934 (ESFDPGSASGTSGSSSQNMGDTLDESSLTAS) is disordered. Residues 909–919 (GSASGTSGSSS) are compositionally biased toward low complexity. Over residues 920-934 (QNMGDTLDESSLTAS) the composition is skewed to polar residues.

The protein belongs to the SNF2/RAD54 helicase family. SMARCAL1 subfamily. Interacts with RPA2; the interaction is direct and mediates the recruitment by the RPA complex of SMARCAL1 to sites of DNA damage. In terms of processing, DNA damage-regulated phosphorylation by kinases that may include ATM, ATR and PRKDC. Ubiquitously expressed, with high levels in testis.

It localises to the nucleus. The enzyme catalyses ATP + H2O = ADP + phosphate + H(+). ATP-dependent annealing helicase that binds selectively to fork DNA relative to ssDNA or dsDNA and catalyzes the rewinding of the stably unwound DNA. Rewinds single-stranded DNA bubbles that are stably bound by replication protein A (RPA). Acts throughout the genome to reanneal stably unwound DNA, performing the opposite reaction of many enzymes, such as helicases and polymerases, that unwind DNA. May play an important role in DNA damage response by acting at stalled replication forks. This chain is SWI/SNF-related matrix-associated actin-dependent regulator of chromatin subfamily A-like protein 1, found in Homo sapiens (Human).